Consider the following 621-residue polypeptide: 2-hydroxyacyl-CoA lyase 2 (621 aa).

Residues 7–29 (LGCSLGAALGGVIFASYKLGLLY) form a helical membrane-spanning segment. Glutamate 87 serves as a coordination point for thiamine diphosphate. Residues 459–539 (DFVGSAAYIM…VIALVGNDAC (81 aa)) form a thiamine pyrophosphate binding region. Mg(2+) contacts are provided by aspartate 510 and asparagine 536.

The protein belongs to the TPP enzyme family. It depends on Mg(2+) as a cofactor. Thiamine diphosphate is required as a cofactor.

The protein resides in the endoplasmic reticulum membrane. The enzyme catalyses 2-hydroxyoctadecanoyl-CoA = heptadecanal + formyl-CoA. It carries out the reaction (2R)-hydroxyhexadecanoyl-CoA = pentadecanal + formyl-CoA. In terms of biological role, endoplasmic reticulum 2-OH acyl-CoA lyase involved in the cleavage (C1 removal) reaction in the fatty acid alpha-oxydation in a thiamine pyrophosphate (TPP)-dependent manner. This is 2-hydroxyacyl-CoA lyase 2 (ilvbl) from Danio rerio (Zebrafish).